Reading from the N-terminus, the 166-residue chain is Interferon gamma (166 aa).

The N-terminal stretch at 1–23 (MKYTSYFLALLLCVLLGFSGSYG) is a signal peptide. Gln24 is modified (pyrrolidone carboxylic acid). 2 N-linked (GlcNAc...) asparagine glycosylation sites follow: Asn39 and Asn106.

This sequence belongs to the type II (or gamma) interferon family. As to quaternary structure, homodimer. Interacts with IFNGR1 (via extracellular domain); this interaction promotes IFNGR1 dimerization. Released primarily from activated T lymphocytes.

It is found in the secreted. Functionally, type II interferon produced by immune cells such as T-cells and NK cells that plays crucial roles in antimicrobial, antiviral, and antitumor responses by activating effector immune cells and enhancing antigen presentation. Primarily signals through the JAK-STAT pathway after interaction with its receptor IFNGR1 to affect gene regulation. Upon IFNG binding, IFNGR1 intracellular domain opens out to allow association of downstream signaling components JAK2, JAK1 and STAT1, leading to STAT1 activation, nuclear translocation and transcription of IFNG-regulated genes. Many of the induced genes are transcription factors such as IRF1 that are able to further drive regulation of a next wave of transcription. Plays a role in class I antigen presentation pathway by inducing a replacement of catalytic proteasome subunits with immunoproteasome subunits. In turn, increases the quantity, quality, and repertoire of peptides for class I MHC loading. Increases the efficiency of peptide generation also by inducing the expression of activator PA28 that associates with the proteasome and alters its proteolytic cleavage preference. Up-regulates as well MHC II complexes on the cell surface by promoting expression of several key molecules such as cathepsins B/CTSB, H/CTSH, and L/CTSL. Participates in the regulation of hematopoietic stem cells during development and under homeostatic conditions by affecting their development, quiescence, and differentiation. This is Interferon gamma (IFNG) from Bubalus carabanensis (Swamp type water buffalo).